Here is a 438-residue protein sequence, read N- to C-terminus: Anaerobic glycerol-3-phosphate dehydrogenase subunit B (438 aa).

The protein belongs to the anaerobic G-3-P dehydrogenase subunit B family. As to quaternary structure, composed of a catalytic GlpA/B dimer and of membrane bound GlpC. The cofactor is FMN.

The enzyme catalyses a quinone + sn-glycerol 3-phosphate = dihydroxyacetone phosphate + a quinol. It functions in the pathway polyol metabolism; glycerol degradation via glycerol kinase pathway; glycerone phosphate from sn-glycerol 3-phosphate (anaerobic route): step 1/1. In terms of biological role, conversion of glycerol 3-phosphate to dihydroxyacetone. Uses fumarate or nitrate as electron acceptor. The chain is Anaerobic glycerol-3-phosphate dehydrogenase subunit B from Vibrio vulnificus (strain CMCP6).